The sequence spans 183 residues: MTMLQQILLISVIIGTVHVHEVDCANEVLKARAYIFEAVKGGNPAKTVGIIDLVQTGTLVKMNGSVSGLQPGLHGFHIHEKGDLGNGCLAAGAHFNPHKMMHGAPEDSNRHVGDLGNIETPKTGDTPILISDSVISLTGQHNVIGRAIVIHADMDDLGRGTSELSKTTGNAGARVACGVIGIL.

Positions 1–32 (MTMLQQILLISVIIGTVHVHEVDCANEVLKAR) are cleaved as a signal peptide. N63 carries N-linked (GlcNAc...) asparagine glycosylation. H77, H79, and H94 together coordinate Cu cation. A disulfide bond links C88 and C177. Zn(2+) is bound by residues H94, H102, H111, and D114. Cu cation is bound at residue H151.

Belongs to the Cu-Zn superoxide dismutase family. Requires Cu cation as cofactor. Zn(2+) is required as a cofactor.

It localises to the secreted. The protein resides in the extracellular space. It catalyses the reaction 2 superoxide + 2 H(+) = H2O2 + O2. Its function is as follows. Destroys radicals which are normally produced within the cells and which are toxic to biological systems. This chain is Extracellular superoxide dismutase [Cu-Zn] (SOD), found in Haemonchus contortus (Barber pole worm).